The sequence spans 72 residues: Large ribosomal subunit protein uL29 (72 aa).

The protein belongs to the universal ribosomal protein uL29 family.

In Prochlorococcus marinus (strain MIT 9301), this protein is Large ribosomal subunit protein uL29.